A 97-amino-acid polypeptide reads, in one-letter code: Large ribosomal subunit protein uL23 (97 aa).

This sequence belongs to the universal ribosomal protein uL23 family. Part of the 50S ribosomal subunit. Contacts protein L29, and trigger factor when it is bound to the ribosome.

Its function is as follows. One of the early assembly proteins it binds 23S rRNA. One of the proteins that surrounds the polypeptide exit tunnel on the outside of the ribosome. Forms the main docking site for trigger factor binding to the ribosome. This is Large ribosomal subunit protein uL23 from Brucella suis (strain ATCC 23445 / NCTC 10510).